The primary structure comprises 381 residues: Guanine nucleotide-binding protein G(olf) subunit alpha (381 aa).

The tract at residues 1–25 is disordered; the sequence is MGCLGNSSKTAEDQGVDEKERREAN. The N-palmitoyl glycine moiety is linked to residue Gly-2. A lipid anchor (S-palmitoyl cysteine) is attached at Cys-3. Basic and acidic residues predominate over residues 10-25; the sequence is TAEDQGVDEKERREAN. The G-alpha domain occupies 41 to 381; that stretch reads ATHRLLLLGA…RMHLKQYELL (341 aa). The G1 motif stretch occupies residues 44–57; the sequence is RLLLLGAGESGKST. GTP contacts are provided by Glu-52, Ser-53, Gly-54, Lys-55, Ser-56, and Thr-57. Ser-56 lines the Mg(2+) pocket. Thr-178 bears the Phosphothreonine mark. The segment at 183 to 191 is G2 motif; sequence DLLRCRVLT. Residues Leu-185, Arg-186, and Thr-191 each contribute to the GTP site. Residues Thr-191 and Asp-210 each coordinate Mg(2+). Residues 206–215 form a G3 motif region; that stretch reads FHMFDVGGQR. GTP is bound by residues Gly-213, Asn-279, Lys-280, Asp-282, and Ala-353. Positions 275–282 are G4 motif; it reads ILFLNKQD. Positions 351–356 are G5 motif; it reads TCAVDT.

Belongs to the G-alpha family. G(s) subfamily. As to quaternary structure, g proteins are composed of 3 units; alpha, beta and gamma. The alpha chain contains the guanine nucleotide binding site. Interacts with GAS2L2. Interacts (GDP-bound form) with RIC8B (via C-terminus); promoting GNAL folding and association with the plasma membrane.

Its subcellular location is the cell membrane. It carries out the reaction GTP + H2O = GDP + phosphate + H(+). In terms of biological role, guanine nucleotide-binding protein (G protein) involved as transducer in olfactory signal transduction controlled by G protein-coupled receptors (GPCRs). Contains the guanine nucleotide binding site and alternates between an active, GTP-bound state and an inactive, GDP-bound state. Signaling by an activated GPCR promotes GDP release and GTP binding. The alpha subunit has a low GTPase activity that converts bound GTP to GDP, thereby terminating the signal. Both GDP release and GTP hydrolysis are modulated by numerous regulatory proteins. GNAL/G(olf) alpha specifically mediates olfactory signal transduction within the olfactory neuroepithelium and the basal ganglia following GPCRs activation. Acts by promoting the specific activation of adenylyl cyclase ADCY3, resulting in increased levels of the signaling molecule cAMP. This Mus musculus (Mouse) protein is Guanine nucleotide-binding protein G(olf) subunit alpha.